The chain runs to 100 residues: Large ribosomal subunit protein uL23 (100 aa).

It belongs to the universal ribosomal protein uL23 family. As to quaternary structure, part of the 50S ribosomal subunit. Contacts protein L29, and trigger factor when it is bound to the ribosome.

In terms of biological role, one of the early assembly proteins it binds 23S rRNA. One of the proteins that surrounds the polypeptide exit tunnel on the outside of the ribosome. Forms the main docking site for trigger factor binding to the ribosome. The chain is Large ribosomal subunit protein uL23 from Thermotoga sp. (strain RQ2).